The chain runs to 224 residues: UPF0758 protein Psyr_0222 (224 aa).

In terms of domain architecture, MPN spans 102–224; the sequence is ALENPTQVRS…PLSMVERGLM (123 aa). Positions 173, 175, and 186 each coordinate Zn(2+). The short motif at 173 to 186 is the JAMM motif element; it reads HNHPSGITTPSRSD.

Belongs to the UPF0758 family.

This chain is UPF0758 protein Psyr_0222, found in Pseudomonas syringae pv. syringae (strain B728a).